Consider the following 463-residue polypeptide: Formate-nitrite transporter 2 (463 aa).

Over 1–100 (MCSIPPLRLL…VKKTQLRIDR (100 aa)) the chain is Cytoplasmic. A helical membrane pass occupies residues 101 to 121 (LLLQAFMAGIFVAMAGHCCTV). Residues 122 to 142 (LAGSYPTDPGDPLAVAKPTQK) are Extracellular-facing. The helical transmembrane segment at 143 to 163 (FIYGALFPVAFICIILTGAEL) threads the bilayer. Residues 164-189 (FTGNTMTMLICYFQKRVTMLQLGVNW) are Cytoplasmic-facing. The helical transmembrane segment at 190–210 (LGSLAGNWLGALFGAYFLSYL) threads the bilayer. Over 211–237 (TGALGDEHVRQFLFRTCVNKISYGWGE) the chain is Extracellular. The chain crosses the membrane as a helical span at residues 238–258 (CFLRGVGCNTFVCLAVWAVIA). The Cytoplasmic segment spans residues 259–265 (SENVAGK). The helical transmembrane segment at 266-286 (VLVMWFPIVAFCVGGYEHIIA) threads the bilayer. Residues 287-305 (NMYTLQAGLMAGAPVAILD) are Extracellular-facing. A helical membrane pass occupies residues 306-326 (VIAFNFLPTLLGNIVGGCLLV). At 327–463 (GAVYAYNFYP…QTAESVAQQV (137 aa)) the chain is on the cytoplasmic side. The segment at 424–463 (SGNLSTHARLDLPNRPVEPPSDGLEVTPQSQTAESVAQQV) is disordered. The segment covering 450 to 463 (TPQSQTAESVAQQV) has biased composition (polar residues).

This sequence belongs to the FNT transporter (TC 1.A.16) family. As to quaternary structure, homopentamer.

The protein localises to the cell membrane. It carries out the reaction (S)-lactate(in) + H(+)(in) = (S)-lactate(out) + H(+)(out). It catalyses the reaction formate(in) + H(+)(in) = formate(out) + H(+)(out). The catalysed reaction is pyruvate(out) + H(+)(out) = pyruvate(in) + H(+)(in). The enzyme catalyses acetate(out) + H(+)(out) = acetate(in) + H(+)(in). With respect to regulation, inhibited by p-chloromercuribenzene sulfonate (pCMBS). Methyl methanethiosulfonate (MMTS) inhibits L-lactate but not formate transport. Inhibited by the Malaria Box compound MMV007839. Inhibited by BH-296, BH-317, BH-326 and BH-388 compounds. Monocarboxylate-proton symporter; active in acidic-to-neutral pH range. Transports L-lactate and formate. The sequence is that of Formate-nitrite transporter 2 from Toxoplasma gondii (strain ATCC 50611 / Me49).